We begin with the raw amino-acid sequence, 75 residues long: Putative membrane protein insertion efficiency factor 2 (75 aa).

This sequence belongs to the UPF0161 family.

The protein resides in the cell membrane. Could be involved in insertion of integral membrane proteins into the membrane. In Bacillus licheniformis (strain ATCC 14580 / DSM 13 / JCM 2505 / CCUG 7422 / NBRC 12200 / NCIMB 9375 / NCTC 10341 / NRRL NRS-1264 / Gibson 46), this protein is Putative membrane protein insertion efficiency factor 2.